The chain runs to 1721 residues: Latent-transforming growth factor beta-binding protein 1 (1721 aa).

The first 23 residues, 1–23 (MAGAWLRWGLLLWAGLLASSAHG), serve as a signal peptide directing secretion. Residues 64–81 (RSSAAAGAPSRASPGVPS) are compositionally biased toward low complexity. The interval 64-158 (RSSAAAGAPS…SGGGSRLQVH (95 aa)) is disordered. A compositionally biased stretch (pro residues) spans 99–111 (RPPPPPPPEPARP). The span at 112 to 130 (AVPGGQLHPNPGGHPAAAP) shows a compositional bias: low complexity. Residues 187-219 (TKPSCVPPCQNGGMCLRPQLCVCKPGTKGKACE) form the EGF-like 1 domain. Intrachain disulfides connect Cys191–Cys201, Cys195–Cys207, and Cys209–Cys218. The segment at 228–259 (SPVFGGQSPGAASSWGPPEQAAKHTSSKKADT) is disordered. 2 N-linked (GlcNAc...) asparagine glycosylation sites follow: Asn347 and Asn378. An EGF-like 2 domain is found at 399 to 431 (RVVICHLPCMNGGQCSSRDKCQCPPNFTGKLCQ). 6 disulfides stabilise this stretch: Cys403–Cys413, Cys407–Cys419, Cys421–Cys430, Cys559–Cys581, Cys568–Cys594, and Cys582–Cys597. Residue Asn424 is glycosylated (N-linked (GlcNAc...) asparagine). The TB 1 domain maps to 557 to 609 (GRCFQETIGSQCGKALPGLSKQEDCCGTVGTSWGFNKCQKCPKKPSYHGYNQM). N-linked (GlcNAc...) asparagine glycosylation occurs at Asn620. The EGF-like 3; calcium-binding domain maps to 626-663 (DINECQLQGVCPNGECLNTMGSYRCTCKIGFGPDPTFS). Disulfide bonds link Cys630–Cys641, Cys636–Cys650, Cys652–Cys665, Cys679–Cys702, Cys689–Cys714, Cys703–Cys717, and Cys704–Cys729. Ser647 carries O-linked (Glc) serine glycosylation. Residues 677 to 729 (GPCYRLVSSGRQCMHPLSVHLTKQLCCCSVGKAWGPHCEKCPLPGTAAFKEIC) enclose the TB 2 domain. Positions 750–811 (VGKGPVFVKP…APPEKEIPSL (62 aa)) are disordered. O-linked (GalNAc...) threonine glycosylation is found at Thr769 and Thr801. The EGF-like 4; calcium-binding domain occupies 873-910 (EINECTVNPDICGAGHCINLPVRYTCICYEGYRFSEQQ). 29 disulfides stabilise this stretch: Cys877–Cys889, Cys884–Cys898, Cys900–Cys913, Cys919–Cys931, Cys926–Cys940, Cys942–Cys955, Cys961–Cys972, Cys967–Cys981, Cys984–Cys996, Cys1002–Cys1013, Cys1008–Cys1022, Cys1025–Cys1036, Cys1042–Cys1053, Cys1048–Cys1062, Cys1064–Cys1077, Cys1083–Cys1094, Cys1089–Cys1103, Cys1105–Cys1118, Cys1124–Cys1135, Cys1130–Cys1144, Cys1146–Cys1159, Cys1165–Cys1177, Cys1172–Cys1186, Cys1188–Cys1200, Cys1206–Cys1218, Cys1212–Cys1227, Cys1229–Cys1242, Cys1248–Cys1260, and Cys1254–Cys1269. Residues 915-956 (DIDECTQVQHLCSQGRCENTEGSFLCICPAGFMASEEGTNCI) enclose the EGF-like 5; calcium-binding domain. O-linked (Glc) serine glycosylation is present at Ser937. In terms of domain architecture, EGF-like 6; calcium-binding spans 957–997 (DVDECLRPDVCGEGHCVNTVGAFRCEYCDSGYRMTQRGRCE). At Asn974 the chain carries (3R)-3-hydroxyasparagine. The EGF-like 7; calcium-binding domain occupies 998–1037 (DIDECLNPSTCPDEQCVNSPGSYQCVPCTEGFRGWNGQCL). O-linked (Glc) serine glycosylation is present at Ser1019. In terms of domain architecture, EGF-like 8; calcium-binding spans 1038 to 1078 (DVDECLEPNVCANGDCSNLEGSYMCSCHKGYTRTPDHKHCR). A glycan (O-linked (Glc) serine) is linked at Ser1059. Residues 1079–1119 (DIDECQQGNLCVNGQCKNTEGSFRCTCGQGYQLSAAKDQCE) enclose the EGF-like 9; calcium-binding domain. Residues 1120–1160 (DIDECQHRHLCAHGQCRNTEGSFQCVCDQGYRASGLGDHCE) form the EGF-like 10; calcium-binding domain. Residue Asn1137 is modified to (3R)-3-hydroxyasparagine. An O-linked (Glc) serine glycan is attached at Ser1141. The EGF-like 11; calcium-binding domain maps to 1161–1201 (DINECLEDKSVCQRGDCINTAGSYDCTCPDGFQLDDNKTCQ). The Cell attachment site signature appears at 1174–1176 (RGD). The N-linked (GlcNAc...) asparagine glycan is linked to Asn1197. The EGF-like 12; calcium-binding domain maps to 1202–1243 (DINECEHPGLCGPQGECLNTEGSFHCVCQQGFSISADGRTCE). Ser1224 carries O-linked (Glc) serine glycosylation. The EGF-like 13; calcium-binding domain occupies 1244 to 1281 (DIDECVNNTVCDSHGFCDNTAGSFRCLCYQGFQAPQDG). Asn1250 is a glycosylation site (N-linked (GlcNAc...) asparagine). An EGF-like 14; calcium-binding domain is found at 1286 to 1328 (DVNECELLSGVCGEAFCENVEGSFLCVCADENQEYSPMTGQCR). Positions 1344-1411 (EEKKECYYNL…PKGKGFVPAG (68 aa)) are 8-Cys3 region. Positions 1347–1401 (KECYYNLNDASLCDNVLAPNVTKQECCCTSGVGWGDNCEIFPCPVLGTAEFTEMC) constitute a TB 3 domain. 4 cysteine pairs are disulfide-bonded: Cys1349-Cys1372, Cys1359-Cys1384, Cys1373-Cys1389, and Cys1374-Cys1401. The N-linked (GlcNAc...) asparagine glycan is linked to Asn1366. Ser1414 carries the phosphoserine; by FAM20C modification. Positions 1424–1466 (DADECLLFGQEICKNGFCLNTRPGYECYCKQGTYYDPVKLQCF) constitute an EGF-like 15; calcium-binding domain. In terms of domain architecture, EGF-like 16; calcium-binding spans 1467 to 1503 (DMDECQDPSSCIDGQCVNTEGSYNCFCTHPMVLDASE). 6 disulfides stabilise this stretch: Cys1471/Cys1482, Cys1477/Cys1491, Cys1526/Cys1550, Cys1536/Cys1562, Cys1551/Cys1565, and Cys1552/Cys1577. A glycan (O-linked (Glc) serine) is linked at Ser1488. Residues 1507 to 1721 (IRPAESNEQI…LNLEKDSDLE (215 aa)) are C-terminal domain. One can recognise a TB 4 domain in the interval 1524-1577 (DLCWEHLSDEYVCSRPLVGKQTTYTECCCLYGEAWGMQCALCPLKDSDDYAQLC). Phosphoserine occurs at positions 1597 and 1616. One can recognise an EGF-like 17 domain in the interval 1621 to 1657 (QAEECGILNGCENGRCVRVQEGYTCDCFDGYHLDTAK). 5 disulfide bridges follow: Cys1625/Cys1636, Cys1631/Cys1645, Cys1666/Cys1681, Cys1676/Cys1690, and Cys1692/Cys1705. The 45-residue stretch at 1662–1706 (DVNECDELNNRMSLCKNAKCINTDGSYKCLCLPGYVPSDKPNYCT) folds into the EGF-like 18; calcium-binding domain. An O-linked (Glc) serine glycan is attached at Ser1687.

The protein belongs to the LTBP family. As to quaternary structure, interacts with TGFB1; associates via disulfide bonds with the Latency-associated peptide chain (LAP) regulatory chain of TGFB1, leading to regulate activation of TGF-beta-1. LTBP1 does not bind directly to TGF-beta-1, the active chain of TGFB1. Interacts (via C-terminal domain) with FBN1 (via N-terminal domain). Interacts with FBN2. Interacts with ADAMTSL2. Interacts with EFEMP2. Post-translationally, contains hydroxylated asparagine residues. In terms of processing, isoform Short N-terminus is blocked. Two intrachain disulfide bonds from the TB3 domain are rearranged upon TGFB1 binding, and form interchain bonds with TGFB1 propeptide, anchoring it to the extracellular matrix. Post-translationally, O-glycosylated on serine residues by POGLUT2 and POGLUT3. In terms of tissue distribution, expressed in the aorta (at protein level). Isoform Long: Expressed in fibroblasts.

It localises to the secreted. Its subcellular location is the extracellular space. The protein resides in the extracellular matrix. Functionally, key regulator of transforming growth factor beta (TGFB1, TGFB2 and TGFB3) that controls TGF-beta activation by maintaining it in a latent state during storage in extracellular space. Associates specifically via disulfide bonds with the Latency-associated peptide (LAP), which is the regulatory chain of TGF-beta, and regulates integrin-dependent activation of TGF-beta. Outcompeted by LRRC32/GARP for binding to LAP regulatory chain of TGF-beta. In Homo sapiens (Human), this protein is Latent-transforming growth factor beta-binding protein 1.